Consider the following 185-residue polypeptide: MKTAQELRVGNVVMIGNDPLVVQKTEYNKSGRNAAVVKMKFKNLLTEAASEAVYKADDKFDVVILEKKEVTYSYFADPMYVFMDAEYNQYEVEADNMTDALNFLEDGMTCEVVFYNGKAISVDLPNSVVREITYTEPAVKGDTSGKVMKPAKIATGFELAVPLFCDIGDKIEIDTRTLEYKNRVK.

Belongs to the elongation factor P family.

It is found in the cytoplasm. The protein operates within protein biosynthesis; polypeptide chain elongation. Functionally, involved in peptide bond synthesis. Stimulates efficient translation and peptide-bond synthesis on native or reconstituted 70S ribosomes in vitro. Probably functions indirectly by altering the affinity of the ribosome for aminoacyl-tRNA, thus increasing their reactivity as acceptors for peptidyl transferase. The chain is Elongation factor P from Methylobacillus flagellatus (strain ATCC 51484 / DSM 6875 / VKM B-1610 / KT).